Reading from the N-terminus, the 310-residue chain is Coproporphyrin III ferrochelatase (310 aa).

Tyr13 serves as a coordination point for Fe-coproporphyrin III. Position 13 (Tyr13) interacts with N-methylmesoporphyrin. Glu20 contacts Mg(2+). Position 30 (Arg30) interacts with Fe-coproporphyrin III. 31 to 33 (RGR) contacts N-methylmesoporphyrin. Arg46 contacts Mg(2+). Residues 46 to 47 (RY), Ser54, and Tyr125 each bind Fe-coproporphyrin III. N-methylmesoporphyrin is bound by residues His183 and Lys188. His183 serves as a coordination point for Fe(2+). Glu264 serves as a coordination point for Fe(2+). Mg(2+) contacts are provided by Asp268 and Glu272.

It belongs to the ferrochelatase family. In terms of assembly, monomer. Interacts with frataxin/Fra.

The protein localises to the cytoplasm. The enzyme catalyses Fe-coproporphyrin III + 2 H(+) = coproporphyrin III + Fe(2+). Its pathway is porphyrin-containing compound metabolism; protoheme biosynthesis. With respect to regulation, stimulated by Mg(2+). Inhibited by Cd(2+). Inhibited by N-methylmesoporphyrin (N-MeMP) and 2,4-disulfonic acid deuteroporphyrin IX (dSDP). Involved in coproporphyrin-dependent heme b biosynthesis. Catalyzes the insertion of ferrous iron into coproporphyrin III to form Fe-coproporphyrin III. It can also insert iron into protoporphyrin IX. Has weaker activity with 2,4 disulfonate, deuteroporphyrin and 2,4 hydroxyethyl. In vitro, can also use Zn(2+) or Cu(2+). This is Coproporphyrin III ferrochelatase from Bacillus subtilis (strain 168).